The following is a 328-amino-acid chain: Carbonic anhydrase-related protein 11 (328 aa).

The N-terminal stretch at 1–23 is a signal peptide; it reads MGAAARLSAPRALVLWAALGAAA. One can recognise an Alpha-carbonic anhydrase domain in the interval 33-303; it reads DWWSYKDNLQ…LAHRALRGNR (271 aa). 3 N-linked (GlcNAc...) asparagine glycosylation sites follow: Asn118, Asn170, and Asn260. A disordered region spans residues 299–328; the sequence is LRGNRDPRHPERRCRGPNYRLHVDGAPHGR. The span at 319-328 shows a compositional bias: basic and acidic residues; sequence LHVDGAPHGR.

Belongs to the alpha-carbonic anhydrase family.

The protein resides in the secreted. Functionally, does not have a catalytic activity. The sequence is that of Carbonic anhydrase-related protein 11 (CA11) from Pongo abelii (Sumatran orangutan).